Here is a 307-residue protein sequence, read N- to C-terminus: MSSSDHIHVPDGLAESYSRSGGEEGRAWIAGLPALVARCVDRWELKRDGGVRSGEASLVVPVLRADGTRAALKLQMPREETTAALIGLRAWGGDGMVRLLDHDEESSTMLLERLDGSRTLASVEDDDEAMGVLAGLLNRLHSVPAPPGLRGLGEIAGAMVEEVPSAVDSLADPEDRSRLRGWASAVAELVGEPGDRVLHWDLHYENVLAAEREPWLAIDPEPLVGDPGFDLWPALDTGWERIEATGDARRVVRRRFDLLTESLELDRGRAAGWTLARLLQNTLWDIEDGLTAIAPSQIAVAEALAKP.

133–145 serves as a coordination point for streptomycin; that stretch reads LAGLLNRLHSVPA. Asp201 acts as the Proton acceptor in catalysis.

Belongs to the aminoglycoside phosphotransferase family.

The enzyme catalyses streptomycin + ATP = streptomycin 6-phosphate + ADP + H(+). The aminoglycoside phosphotransferases achieve inactivation of their antibiotic substrates by phosphorylation. The sequence is that of Streptomycin 6-kinase (aphD) from Streptomyces griseus.